The following is a 301-amino-acid chain: MKSNPAIQAAIDLTAGAAGGTACVLTGQPFDTMKVKMQTFPDLYRGLTDCCLRTYSQVGFRGFYKGTSPALIANIAENSVLFMCYGFCQQVVRKVVGLDRQAKLSDLQNAAAGSFASAFAALVLCPTELVKCRLQTMYEMETSGKIAASQNTVWSVVKEIFRKDGPLGFYHGLSSTLLREVPGYFFFFGGYELSRSFFASGRSKDELGPIPLMLSGGFGGICLWLAVYPVDCIKSRIQVLSMTGKQTGLIRTFLSIVKNEGITALYSGLKPTMIRAFPANGALFLAYEYSRKLMMSQLEAC.

6 helical membrane passes run 5-25 (PAIQ…ACVL), 68-88 (SPAL…YGFC), 110-130 (AAAG…TELV), 168-188 (GFYH…FFFF), 207-227 (LGPI…WLAV), and 237-257 (IQVL…LSIV). Solcar repeat units lie at residues 7-91 (IQAA…CQQV), 104-197 (LSDL…SRSF), and 207-293 (LGPI…SRKL).

This sequence belongs to the mitochondrial carrier (TC 2.A.29) family. Expressed in the liver (at protein level).

The protein localises to the mitochondrion inner membrane. The protein resides in the mitochondrion membrane. The catalysed reaction is L-citrulline(in) + L-ornithine(out) + H(+)(in) = L-citrulline(out) + L-ornithine(in) + H(+)(out). It catalyses the reaction L-ornithine(in) + L-arginine(out) = L-ornithine(out) + L-arginine(in). It carries out the reaction L-ornithine(out) + L-lysine(in) = L-ornithine(in) + L-lysine(out). The enzyme catalyses L-ornithine(out) + H(+)(in) = L-ornithine(in) + H(+)(out). The catalysed reaction is L-lysine(out) + H(+)(in) = L-lysine(in) + H(+)(out). Its activity is regulated as follows. Inhibited by pyridoxal 5'-phosphate as well as by mercurials (mersalyl, p-chloromercuribenzene sulfonate, and mercuric chloride), N-ethylmaleimide and spermine. In terms of biological role, mitochondrial ornithine-citrulline antiporter. Catalyzes the exchange between cytosolic ornithine and mitochondrial citrulline plus an H(+), the proton compensates the positive charge of ornithine thus leading to an electroneutral transport. Plays a crucial role in the urea cycle, by connecting the cytosolic and the intramitochondrial reactions of the urea cycle. Lysine and arginine are also transported by the antiport mechanism. In addition, catalyzes an electroneutral exchange of ornithine or lysine for H(+), a reaction driven by the pH gradient across the inner membrane. The sequence is that of Mitochondrial ornithine transporter 1 (Slc25a15) from Rattus norvegicus (Rat).